Consider the following 187-residue polypeptide: Elongation factor P (187 aa).

The protein belongs to the elongation factor P family.

Its subcellular location is the cytoplasm. Its pathway is protein biosynthesis; polypeptide chain elongation. Involved in peptide bond synthesis. Stimulates efficient translation and peptide-bond synthesis on native or reconstituted 70S ribosomes in vitro. Probably functions indirectly by altering the affinity of the ribosome for aminoacyl-tRNA, thus increasing their reactivity as acceptors for peptidyl transferase. The sequence is that of Elongation factor P from Nocardia farcinica (strain IFM 10152).